The sequence spans 80 residues: MMKLMLFSIIVILFSLIGSIHGADVPGNYPLDSSDDTYLCAPLGENPSCIQICRKHGVKYGYCYAFQCWCEYLEDKNVKI.

An N-terminal signal peptide occupies residues 1–22 (MMKLMLFSIIVILFSLIGSIHG). The LCN-type CS-alpha/beta domain occupies 25 to 80 (VPGNYPLDSSDDTYLCAPLGENPSCIQICRKHGVKYGYCYAFQCWCEYLEDKNVKI). Cystine bridges form between Cys40–Cys63, Cys49–Cys68, and Cys53–Cys70.

The protein belongs to the long (3 C-C) scorpion toxin superfamily. Sodium/Potassium channel inhibitor family. As to expression, expressed by the venom gland.

The protein resides in the secreted. Its function is as follows. Weakly inhibits the vertebrate potassium channel Kv1.1/KCNA1. The sequence is that of Beta-toxin KAaH2 from Androctonus australis (Sahara scorpion).